We begin with the raw amino-acid sequence, 154 residues long: Ribonuclease 8 (154 aa).

Residues 1-27 (MAPARAGCCPLLLLLLGLWVAQIPVSA) form the signal peptide. Catalysis depends on His42, which acts as the Proton acceptor. Disulfide bonds link Cys64–Cys118 and Cys89–Cys96. Substrate contacts are provided by residues 65–69 (KDLNT) and Lys90. His149 functions as the Proton donor in the catalytic mechanism.

This sequence belongs to the pancreatic ribonuclease family.

The protein resides in the secreted. Has a low ribonuclease activity. In Chlorocebus aethiops (Green monkey), this protein is Ribonuclease 8 (RNASE8).